We begin with the raw amino-acid sequence, 20 residues long: Alpha-1B-glycoprotein (20 aa).

Residues 1 to 20 (AVVFDPQPALWAEADTQLEP) are disordered.

As to quaternary structure, interacts with CRISP3. In terms of processing, glycosylated. As to expression, plasma.

The protein localises to the secreted. This chain is Alpha-1B-glycoprotein (A1BG), found in Equus asinus (Donkey).